We begin with the raw amino-acid sequence, 859 residues long: Leucine--tRNA ligase (859 aa).

The short motif at 42 to 52 (PYPSGRLHMGH) is the 'HIGH' region element. The 'KMSKS' region signature appears at 618-622 (KMSKS). Lys-621 provides a ligand contact to ATP.

It belongs to the class-I aminoacyl-tRNA synthetase family.

The protein localises to the cytoplasm. The catalysed reaction is tRNA(Leu) + L-leucine + ATP = L-leucyl-tRNA(Leu) + AMP + diphosphate. The sequence is that of Leucine--tRNA ligase from Shewanella putrefaciens (strain CN-32 / ATCC BAA-453).